The chain runs to 100 residues: Small ribosomal subunit protein uS14c (100 aa).

This sequence belongs to the universal ribosomal protein uS14 family. Part of the 30S ribosomal subunit.

The protein localises to the plastid. It localises to the chloroplast. Its function is as follows. Binds 16S rRNA, required for the assembly of 30S particles. This Coffea arabica (Arabian coffee) protein is Small ribosomal subunit protein uS14c.